We begin with the raw amino-acid sequence, 399 residues long: Ribonucleoside-diphosphate reductase small chain 1 (399 aa).

A phosphoserine mark is found at Ser15, Ser24, and Ser41. 3 residues coordinate Fe cation: Asp145, Glu176, and His179. Tyr183 is an active-site residue. Residues Glu239, Glu273, and His276 each contribute to the Fe cation site.

The protein belongs to the ribonucleoside diphosphate reductase small chain family. Heterotetramer of two large (R1) and two small (R2) subunits. S.cerevisiae has two different R1 subunits (RNR1 and RNR3) and two different R2 subunits (RNR2 and RNR4). The functional form of the small subunits is a RNR2-RNR4 heterodimer, where RNR2 provides the iron-radical center and RNR4 is required for proper folding of RNR2 and assembly with the large subunits. Under normal growth conditions, the active form of the large subunits is a homodimer of the constitutively expressed RNR1. In damaged cells or cells arrested for DNA synthesis, the reductase consists of multiple species because of the association of the small subunits (RNR2-RNR4) with either the RNR1 homodimer or a heterodimer of RNR1 and the damage-inducible RNR3. Interacts with DIF1. Fe cation serves as cofactor.

It is found in the nucleus. It catalyses the reaction a 2'-deoxyribonucleoside 5'-diphosphate + [thioredoxin]-disulfide + H2O = a ribonucleoside 5'-diphosphate + [thioredoxin]-dithiol. Provides the precursors necessary for DNA synthesis. Catalyzes the biosynthesis of deoxyribonucleotides from the corresponding ribonucleotides. RNR2 provides the diiron-tyrosyl radical center. This is Ribonucleoside-diphosphate reductase small chain 1 (RNR2) from Saccharomyces cerevisiae (strain ATCC 204508 / S288c) (Baker's yeast).